The sequence spans 362 residues: Transcription factor Sox-7 (362 aa).

Residues 21–41 are disordered; it reads EDLSDGLSPHRSPREKGSETR. The span at 32–41 shows a compositional bias: basic and acidic residues; that stretch reads SPREKGSETR. The HMG box DNA-binding region spans 42-110; it reads IRRPMNAFMV…QHMQDYPNYK (69 aa). Residues 245-362 enclose the Sox C-terminal domain; the sequence is QTGSSMIPPV…ATYYNSYSVS (118 aa).

In terms of tissue distribution, expressed in the embryonic pronephric sinus as well as posterior cardinal veins.

Its subcellular location is the nucleus. In terms of biological role, transcription factor. Binds to the DNA sequence 5'-AACAAT-3'. Acts downstream of vegt and upstream of nodal signaling to promote endodermal and mesodermal differentiation by promoting vegt-induced expression of both endodermal genes (including endodermin) and mesodermal genes (including snai1/snail and snai2/slug). Induces expression of multiple nodal genes (including nodal, nodal2, nodal4, nodal5 and nodal6) and binds directly to sites within the promoter of the nodal5 gene. The endodermal and mesodermal specification pathways then interact to initiate cardiogenesis. Acts partially redundantly with sox18 during cardiogenesis. Also acts as an antagonist of beta-catenin signaling. Regulates (possibly indirectly) development of the pronephros, the functional larval kidney. The protein is Transcription factor Sox-7 of Xenopus tropicalis (Western clawed frog).